The primary structure comprises 572 residues: Mitochondrial distribution and morphology protein 34 (572 aa).

The 195-residue stretch at 1–195 folds into the SMP-LTD domain; that stretch reads MAFNFNWSPL…LPAIIHRLSL (195 aa). 4 disordered regions span residues 212–236, 355–426, 487–507, and 552–572; these read TASA…VDAL, GAGR…PDND, HGAS…GSSR, and ACGP…AYGH. Basic residues predominate over residues 358–370; that stretch reads RHSKAHARKRKKR. Residues 371 to 381 are compositionally biased toward basic and acidic residues; it reads VVDLRRPKTTD. Polar residues predominate over residues 387-400; sequence SDESSFTESTSAPS.

The protein belongs to the MDM34 family. As to quaternary structure, component of the ER-mitochondria encounter structure (ERMES) or MDM complex, composed of mmm1, mdm10, mdm12 and mdm34.

It localises to the mitochondrion outer membrane. Functionally, component of the ERMES/MDM complex, which serves as a molecular tether to connect the endoplasmic reticulum (ER) and mitochondria. Components of this complex are involved in the control of mitochondrial shape and protein biogenesis, and function in nonvesicular lipid trafficking between the ER and mitochondria. Mdm34 is required for the interaction of the ER-resident membrane protein mmm1 and the outer mitochondrial membrane-resident beta-barrel protein mdm10. This chain is Mitochondrial distribution and morphology protein 34, found in Aspergillus fumigatus (strain ATCC MYA-4609 / CBS 101355 / FGSC A1100 / Af293) (Neosartorya fumigata).